A 279-amino-acid chain; its full sequence is 1D-myo-inositol 2-acetamido-2-deoxy-alpha-D-glucopyranoside deacetylase (279 aa).

Residues His12, Asp15, and His146 each contribute to the Zn(2+) site.

It belongs to the MshB deacetylase family. It depends on Zn(2+) as a cofactor.

The enzyme catalyses 1D-myo-inositol 2-acetamido-2-deoxy-alpha-D-glucopyranoside + H2O = 1D-myo-inositol 2-amino-2-deoxy-alpha-D-glucopyranoside + acetate. Functionally, catalyzes the deacetylation of 1D-myo-inositol 2-acetamido-2-deoxy-alpha-D-glucopyranoside (GlcNAc-Ins) in the mycothiol biosynthesis pathway. This Mycobacteroides abscessus (strain ATCC 19977 / DSM 44196 / CCUG 20993 / CIP 104536 / JCM 13569 / NCTC 13031 / TMC 1543 / L948) (Mycobacterium abscessus) protein is 1D-myo-inositol 2-acetamido-2-deoxy-alpha-D-glucopyranoside deacetylase.